The chain runs to 334 residues: MGPLMLDVQGCELDAEEREILRHPTVGGVILFGRNYHDRSQLSALVKTIRQAANKPLLIAVDHEGGRVQRFRNGFSRIPPMGILHKARNQATDLATECGWLMAAELLAHDIDLSFAPVLDLERGSNVIGDRSFSSDPEQVIQLASAFIDGMHQAGMKATGKHFPGHGSVRADSHLESPRDNRSWEEIEATDLVPFRELIPAGKLDAIMPAHVIYTELDDQPAGFSRFWLQEVLRGKYGFNGIIFSDDLTMEGAAVAGGYPERAQAALNAGCDMLLACNNRAGAVAILDGLQNPPASRAESLLSTNNGDWSRLTSTSRWKNTQNRVQIFTEEFVN.

Substrate is bound by residues D62, R70, R131, and 161–162; that span reads KH. H174 acts as the Proton donor/acceptor in catalysis. Catalysis depends on D246, which acts as the Nucleophile.

This sequence belongs to the glycosyl hydrolase 3 family. NagZ subfamily.

The protein localises to the cytoplasm. The enzyme catalyses Hydrolysis of terminal non-reducing N-acetyl-D-hexosamine residues in N-acetyl-beta-D-hexosaminides.. It participates in cell wall biogenesis; peptidoglycan recycling. Plays a role in peptidoglycan recycling by cleaving the terminal beta-1,4-linked N-acetylglucosamine (GlcNAc) from peptide-linked peptidoglycan fragments, giving rise to free GlcNAc, anhydro-N-acetylmuramic acid and anhydro-N-acetylmuramic acid-linked peptides. The chain is Beta-hexosaminidase from Tolumonas auensis (strain DSM 9187 / NBRC 110442 / TA 4).